The following is a 122-amino-acid chain: Small ribosomal subunit protein uS13c (122 aa).

Residues 102–122 (RTRTNARTRRGAKKTVAGKKK) form a disordered region.

Belongs to the universal ribosomal protein uS13 family. Part of the 30S ribosomal subunit.

The protein localises to the plastid. The protein resides in the chloroplast. In terms of biological role, located at the top of the head of the 30S subunit, it contacts several helices of the 16S rRNA. This chain is Small ribosomal subunit protein uS13c, found in Guillardia theta (Cryptophyte).